The following is a 399-amino-acid chain: O-glucosyltransferase rumi homolog (399 aa).

Positions Met1 to Ser18 are cleaved as a signal peptide. Asn19 and Asn67 each carry an N-linked (GlcNAc...) asparagine glycan. Intrachain disulfides connect Cys66–Cys73, Cys71–Cys373, Cys118–Cys124, and Cys277–Cys300. Asp149 acts as the Proton donor/acceptor in catalysis. The tract at residues Ala189–Pro194 is interaction with the consensus sequence C-X-S-X-[PA]-C in peptide substrates. UDP-alpha-D-glucose-binding positions include Arg224–Thr228, Arg232, Val271–Leu273, and Ala289–Arg293.

This sequence belongs to the glycosyltransferase 90 family.

It localises to the endoplasmic reticulum lumen. It is found in the secreted. It participates in protein modification; protein glycosylation. In terms of biological role, protein O-glucosyltransferase. Catalyzes the reaction that attaches glucose through an O-glycosidic linkage to a conserved serine residue found in the consensus sequence C-X-S-X-[PA]-C in epidermal growth factor-like repeats. Regulates Notch signaling by glucosylating Notch in the ER, glucosylation is required for the correct folding and cleavage of Notch. The sequence is that of O-glucosyltransferase rumi homolog from Anopheles gambiae (African malaria mosquito).